The sequence spans 447 residues: Glutamate--tRNA ligase 1 (447 aa).

Residues 10–20 (PSPTGMLHVGN) carry the 'HIGH' region motif. Residues 240–244 (KISKR) carry the 'KMSKS' region motif. K243 lines the ATP pocket.

Belongs to the class-I aminoacyl-tRNA synthetase family. Glutamate--tRNA ligase type 1 subfamily. Monomer.

The protein resides in the cytoplasm. It catalyses the reaction tRNA(Glu) + L-glutamate + ATP = L-glutamyl-tRNA(Glu) + AMP + diphosphate. In terms of biological role, catalyzes the attachment of glutamate to tRNA(Glu) in a two-step reaction: glutamate is first activated by ATP to form Glu-AMP and then transferred to the acceptor end of tRNA(Glu). In Rickettsia conorii (strain ATCC VR-613 / Malish 7), this protein is Glutamate--tRNA ligase 1.